We begin with the raw amino-acid sequence, 91 residues long: Putative regulatory protein DSY2730 (91 aa).

It belongs to the RemA family.

The polypeptide is Putative regulatory protein DSY2730 (Desulfitobacterium hafniense (strain Y51)).